Here is a 389-residue protein sequence, read N- to C-terminus: Protein OSCP1 (389 aa).

As to expression, expressed predominantly in testis, also found in placenta and to a lesser extent in thymus and small intestine; abundantly expressed in tumor-derived cell lines. Ubiquitously expressed.

Its subcellular location is the basal cell membrane. May be involved in drug clearance in the placenta. This Homo sapiens (Human) protein is Protein OSCP1 (OSCP1).